Reading from the N-terminus, the 576-residue chain is Arginine--tRNA ligase (576 aa).

The short motif at 126–136 (ANPTGPMHIGH) is the 'HIGH' region element.

This sequence belongs to the class-I aminoacyl-tRNA synthetase family. As to quaternary structure, monomer.

It localises to the cytoplasm. The enzyme catalyses tRNA(Arg) + L-arginine + ATP = L-arginyl-tRNA(Arg) + AMP + diphosphate. This chain is Arginine--tRNA ligase (argS), found in Rickettsia prowazekii (strain Madrid E).